A 565-amino-acid polypeptide reads, in one-letter code: Sulfite reductase [NADPH] hemoprotein beta-component (565 aa).

[4Fe-4S] cluster is bound by residues Cys-429, Cys-435, Cys-474, and Cys-478. A siroheme-binding site is contributed by Cys-478.

The protein belongs to the nitrite and sulfite reductase 4Fe-4S domain family. As to quaternary structure, alpha(8)-beta(8). The alpha component is a flavoprotein, the beta component is a hemoprotein. It depends on siroheme as a cofactor. [4Fe-4S] cluster is required as a cofactor.

The enzyme catalyses hydrogen sulfide + 3 NADP(+) + 3 H2O = sulfite + 3 NADPH + 4 H(+). It participates in sulfur metabolism; hydrogen sulfide biosynthesis; hydrogen sulfide from sulfite (NADPH route): step 1/1. In terms of biological role, component of the sulfite reductase complex that catalyzes the 6-electron reduction of sulfite to sulfide. This is one of several activities required for the biosynthesis of L-cysteine from sulfate. The polypeptide is Sulfite reductase [NADPH] hemoprotein beta-component (Shewanella baltica (strain OS155 / ATCC BAA-1091)).